Here is a 600-residue protein sequence, read N- to C-terminus: Glutamine--fructose-6-phosphate aminotransferase [isomerizing] (600 aa).

Cys-2 acts as the Nucleophile; for GATase activity in catalysis. Residues 2-217 enclose the Glutamine amidotransferase type-2 domain; sequence CGIVGFIGEQ…DKEIVIVTKE (216 aa). SIS domains are found at residues 283–422 and 452–590; these read IRNA…AKGE and LAKQ…VDKP. The active-site For Fru-6P isomerization activity is Lys-595.

As to quaternary structure, homodimer.

It localises to the cytoplasm. It catalyses the reaction D-fructose 6-phosphate + L-glutamine = D-glucosamine 6-phosphate + L-glutamate. Functionally, catalyzes the first step in hexosamine metabolism, converting fructose-6P into glucosamine-6P using glutamine as a nitrogen source. This Bacillus cereus (strain ATCC 10987 / NRS 248) protein is Glutamine--fructose-6-phosphate aminotransferase [isomerizing].